The sequence spans 89 residues: Small ribosomal subunit protein uS15 (89 aa).

Belongs to the universal ribosomal protein uS15 family. In terms of assembly, part of the 30S ribosomal subunit. Forms a bridge to the 50S subunit in the 70S ribosome, contacting the 23S rRNA.

Its function is as follows. One of the primary rRNA binding proteins, it binds directly to 16S rRNA where it helps nucleate assembly of the platform of the 30S subunit by binding and bridging several RNA helices of the 16S rRNA. Forms an intersubunit bridge (bridge B4) with the 23S rRNA of the 50S subunit in the ribosome. The protein is Small ribosomal subunit protein uS15 of Hamiltonella defensa subsp. Acyrthosiphon pisum (strain 5AT).